Consider the following 259-residue polypeptide: Phosphate import ATP-binding protein PstB (259 aa).

One can recognise an ABC transporter domain in the interval 2–248; it reads GQRIDVNHEN…ITMFNNPQNE (247 aa). ATP is bound at residue 37–44; that stretch reads GPSGCGKS.

Belongs to the ABC transporter superfamily. Phosphate importer (TC 3.A.1.7) family. As to quaternary structure, the complex is composed of two ATP-binding proteins (PstB), two transmembrane proteins (PstC and PstA) and a solute-binding protein (PstS).

It is found in the cell membrane. It carries out the reaction phosphate(out) + ATP + H2O = ADP + 2 phosphate(in) + H(+). Its function is as follows. Part of the ABC transporter complex PstSACB involved in phosphate import. Responsible for energy coupling to the transport system. This is Phosphate import ATP-binding protein PstB from Bifidobacterium longum (strain NCC 2705).